A 179-amino-acid polypeptide reads, in one-letter code: Large ribosomal subunit protein uL6 (179 aa).

This sequence belongs to the universal ribosomal protein uL6 family. In terms of assembly, part of the 50S ribosomal subunit.

Functionally, this protein binds to the 23S rRNA, and is important in its secondary structure. It is located near the subunit interface in the base of the L7/L12 stalk, and near the tRNA binding site of the peptidyltransferase center. This chain is Large ribosomal subunit protein uL6, found in Pelodictyon phaeoclathratiforme (strain DSM 5477 / BU-1).